The primary structure comprises 126 residues: Large ribosomal subunit protein eL8 (126 aa).

The protein belongs to the eukaryotic ribosomal protein eL8 family. Part of the 50S ribosomal subunit. Probably part of the RNase P complex.

It is found in the cytoplasm. Its function is as follows. Multifunctional RNA-binding protein that recognizes the K-turn motif in ribosomal RNA, the RNA component of RNase P, box H/ACA, box C/D and box C'/D' sRNAs. The protein is Large ribosomal subunit protein eL8 of Sulfolobus acidocaldarius (strain ATCC 33909 / DSM 639 / JCM 8929 / NBRC 15157 / NCIMB 11770).